The sequence spans 400 residues: 1-deoxy-D-xylulose 5-phosphate reductoisomerase (400 aa).

7 residues coordinate NADPH: Thr10, Gly11, Ser12, Ile13, Gly36, Asn38, and Asn124. Residue Lys125 participates in 1-deoxy-D-xylulose 5-phosphate binding. Glu126 is a binding site for NADPH. Asp150 contributes to the Mn(2+) binding site. Positions 151, 152, 186, and 209 each coordinate 1-deoxy-D-xylulose 5-phosphate. Position 152 (Glu152) interacts with Mn(2+). Position 215 (Gly215) interacts with NADPH. Ser222, Asn227, Lys228, and Glu231 together coordinate 1-deoxy-D-xylulose 5-phosphate. Mn(2+) is bound at residue Glu231.

The protein belongs to the DXR family. The cofactor is Mg(2+). Mn(2+) is required as a cofactor.

The catalysed reaction is 2-C-methyl-D-erythritol 4-phosphate + NADP(+) = 1-deoxy-D-xylulose 5-phosphate + NADPH + H(+). The protein operates within isoprenoid biosynthesis; isopentenyl diphosphate biosynthesis via DXP pathway; isopentenyl diphosphate from 1-deoxy-D-xylulose 5-phosphate: step 1/6. Functionally, catalyzes the NADPH-dependent rearrangement and reduction of 1-deoxy-D-xylulose-5-phosphate (DXP) to 2-C-methyl-D-erythritol 4-phosphate (MEP). This chain is 1-deoxy-D-xylulose 5-phosphate reductoisomerase, found in Aliivibrio fischeri (strain ATCC 700601 / ES114) (Vibrio fischeri).